Here is a 527-residue protein sequence, read N- to C-terminus: 2-isopropylmalate synthase (527 aa).

A Pyruvate carboxyltransferase domain is found at 18 to 280 (IRIFDTTLRD…QTNINSKRLV (263 aa)). Mn(2+) is bound by residues Asp27, His215, His217, and Asn251. The regulatory domain stretch occupies residues 405–527 (TLVDYEVTSG…ASDPGELPQP (123 aa)).

It belongs to the alpha-IPM synthase/homocitrate synthase family. LeuA type 1 subfamily. In terms of assembly, homodimer. Requires Mn(2+) as cofactor.

The protein resides in the cytoplasm. It carries out the reaction 3-methyl-2-oxobutanoate + acetyl-CoA + H2O = (2S)-2-isopropylmalate + CoA + H(+). It participates in amino-acid biosynthesis; L-leucine biosynthesis; L-leucine from 3-methyl-2-oxobutanoate: step 1/4. Functionally, catalyzes the condensation of the acetyl group of acetyl-CoA with 3-methyl-2-oxobutanoate (2-ketoisovalerate) to form 3-carboxy-3-hydroxy-4-methylpentanoate (2-isopropylmalate). This Rhodopirellula baltica (strain DSM 10527 / NCIMB 13988 / SH1) protein is 2-isopropylmalate synthase.